Here is a 528-residue protein sequence, read N- to C-terminus: Golgi resident protein GCP60 (528 aa).

The tract at residues 1 to 71 (MAAVLNAERL…EAAAGGAAEE (71 aa)) is disordered. At A2 the chain carries N-acetylalanine; in Golgi resident protein GCP60, N-terminally processed. Phosphoserine is present on S13. T18 carries the phosphothreonine modification. Phosphoserine is present on residues S20, S43, and S47. Positions 34–45 (LLPPPLPPPSPP) are enriched in pro residues. Residues 54-69 (SGEQPEPGEAAAGGAA) show a composition bias toward low complexity. An ACB domain is found at 83–174 (LEELYGLALR…LNRCCHLFST (92 aa)). Residues 174–257 (TYVASHKIEK…AALNSQTAVQ (84 aa)) are a coiled coil. The tract at residues 182-230 (EKEEQEKKRKEEEERRRREEEERERLQKEEEKRRREEEERLRREEEERR) is disordered. The tract at residues 182–240 (EKEEQEKKRKEEEERRRREEEERERLQKEEEKRRREEEERLRREEEERRRIEEERLRLE) is charged amino-acid region (CAR). The interval 241-308 (QQKQQIMAAL…QQQAALQKQQ (68 aa)) is q domain; Interaction with PI4KB, TBC1D22A and TBC1D22B. The tract at residues 335 to 362 (NGQAKTHTDSSEKELEPEAAEEALENGP) is disordered. A compositionally biased stretch (basic and acidic residues) spans 340-350 (THTDSSEKELE). In terms of domain architecture, GOLD spans 384-526 (KEKIQQDADS…SKSVYYRVYY (143 aa)). Residues 514 to 516 (LWR) are membrane-binding.

As to quaternary structure, homodimer. Interacts with the C-terminal cytoplasmic domain of giantin/GOLGB1. Interacts with PBR and PKA regulatory subunit RI-alpha. Does not interact with PKA regulatory subunit RI-beta nor PKA regulatory subunit RII-alpha. Interacts (via Q domain) with PI4KB (via N-terminus). Interacts (via Q domain) with TBC1D22A and TBC1D22B; interactions with PI4KB and with TBC1D22A and TBC1D22B are mutually exclusive. Interacts with C10ORF76 and RAB11B. (Microbial infection) Interacts (via GOLD domain) with 3A proteins from various picornaviruses, including poliovirus, enterovirus A71, enterovirus D68, hepatitis A virus, human parechovirus 1, poliovirus, Human rhinovirus-14 (Hrv-14), coysackievirus B2, coysackievirus B3, coysackievirus B5, Aichi virus and human klassevirus. Interacts (via GOLD domain) with Aichi virus protein 3A; this interaction allows the formation of a 3A/ACBD3/PI4KB complex in order to synthesize PI4P at the viral RNA replication sites. Interacts with Aichi virus protein 2B. Interacts with Aichi virus protein 2C. As to expression, ubiquitous, with highest expression in testis and ovary.

The protein localises to the golgi apparatus membrane. It localises to the mitochondrion. Its function is as follows. Involved in the maintenance of Golgi structure by interacting with giantin, affecting protein transport between the endoplasmic reticulum and Golgi. Involved in hormone-induced steroid biosynthesis in testicular Leydig cells. Recruits PI4KB to the Golgi apparatus membrane; enhances the enzyme activity of PI4KB activity via its membrane recruitment thereby increasing the local concentration of the substrate in the vicinity of the kinase. Functionally, (Microbial infection) Plays an essential role in Aichi virus RNA replication by recruiting PI4KB at the viral replication sites. The chain is Golgi resident protein GCP60 (ACBD3) from Homo sapiens (Human).